Reading from the N-terminus, the 389-residue chain is 5-hydroxytryptamine receptor 1B (389 aa).

The disordered stretch occupies residues 1-27; sequence MEAAGAPCAPPPPAGSQTGAPPANLSS. The Extracellular segment spans residues 1–45; sequence MEAAGAPCAPPPPAGSQTGAPPANLSSAPHNCSAEGYIYQDSVAL. Positions 16–27 are enriched in polar residues; it reads SQTGAPPANLSS. N-linked (GlcNAc...) asparagine glycans are attached at residues N24 and N31. The chain crosses the membrane as a helical span at residues 46–71; sequence PWKVLLVILLALITLATTLSNAFVIA. The Cytoplasmic portion of the chain corresponds to 72 to 85; it reads TVYRTRKLHTPANY. A helical membrane pass occupies residues 86 to 110; sequence LIASLAVTDLLVSILVMPISTMYTV. The Extracellular segment spans residues 111–118; it reads TGRWTLGQ. Residues 119–144 traverse the membrane as a helical segment; sequence VVCDLWLSSDITCCTASILHLCVIAL. C121 and C198 are oxidised to a cystine. 2 residues coordinate ergotamine: D128 and T133. Residues 145 to 147 carry the DRY motif; important for ligand-induced conformation changes and signaling motif; the sequence is DRY. The Cytoplasmic portion of the chain corresponds to 145 to 164; sequence DRYWAITDAVEYSAKRTPKR. Residues 165 to 183 form a helical membrane-spanning segment; it reads AAVMIALVWVFSISISLPP. Topologically, residues 184–204 are extracellular; it reads FFWRQAKAEEEVSDCVVNTDH. V200 contacts ergotamine. A helical transmembrane segment spans residues 205-228; it reads ILYTVYSTVGAFYFPTLLLIALYG. At 229–314 the chain is on the cytoplasmic side; sequence RIYVEARSRI…AARERKATKT (86 aa). Over residues 258-271 the composition is skewed to polar residues; sequence DSPGSTSSVTSVNS. The disordered stretch occupies residues 258-281; that stretch reads DSPGSTSSVTSVNSRAPDVPSESG. A helical transmembrane segment spans residues 315–336; sequence LGIILGAFIVCWLPFFIISLVM. The Extracellular portion of the chain corresponds to 337 to 346; that stretch reads PICKDACWFH. A helical transmembrane segment spans residues 347–369; that stretch reads LAIFDFFTWLGYLNSLINPIIYT. The short motif at 364-368 is the NPxxY motif; important for ligand-induced conformation changes and signaling element; that stretch reads NPIIY. Residues 370-389 are Cytoplasmic-facing; the sequence is MSNEDFKQAFHKLIRFKCAG. C387 carries S-palmitoyl cysteine lipidation.

The protein belongs to the G-protein coupled receptor 1 family. Homodimer. Heterodimer with HTR1D. Post-translationally, phosphorylated. Desensitization of the receptor may be mediated by its phosphorylation. In terms of processing, palmitoylated.

It localises to the cell membrane. G-protein coupled receptor for 5-hydroxytryptamine (serotonin). Also functions as a receptor for ergot alkaloid derivatives, various anxiolytic and antidepressant drugs and other psychoactive substances, such as lysergic acid diethylamide (LSD). Ligand binding causes a conformation change that triggers signaling via guanine nucleotide-binding proteins (G proteins) and modulates the activity of downstream effectors, such as adenylate cyclase. HTR1B is coupled to G(i)/G(o) G alpha proteins and mediates inhibitory neurotransmission by inhibiting adenylate cyclase activity. Arrestin family members inhibit signaling via G proteins and mediate activation of alternative signaling pathways. Regulates the release of 5-hydroxytryptamine, dopamine and acetylcholine in the brain, and thereby affects neural activity, nociceptive processing, pain perception, mood and behavior. Besides, plays a role in vasoconstriction of cerebral arteries. This chain is 5-hydroxytryptamine receptor 1B (HTR1B), found in Canis lupus familiaris (Dog).